A 310-amino-acid polypeptide reads, in one-letter code: Porphobilinogen deaminase (310 aa).

Cys241 bears the S-(dipyrrolylmethanemethyl)cysteine mark.

This sequence belongs to the HMBS family. Monomer. Dipyrromethane serves as cofactor.

It catalyses the reaction 4 porphobilinogen + H2O = hydroxymethylbilane + 4 NH4(+). It participates in porphyrin-containing compound metabolism; protoporphyrin-IX biosynthesis; coproporphyrinogen-III from 5-aminolevulinate: step 2/4. Its function is as follows. Tetrapolymerization of the monopyrrole PBG into the hydroxymethylbilane pre-uroporphyrinogen in several discrete steps. The polypeptide is Porphobilinogen deaminase (Lysinibacillus sphaericus (strain C3-41)).